We begin with the raw amino-acid sequence, 296 residues long: MTKKQLHLVIVTGMSGAGKTVAIQSFEDLGYFTIDNMPPALLPKFLQLVEIKEDNPKLALVVDMRSRSFFSEIQAVLDELENQDGLDFKILFLDAADKELVARYKETRRSHPLAADGRILDGIKLERELLAPLKNMSQNVVDTTELTPRELRKTLAEQFSDQEQAQSFRIEVMSFGFKYGIPIDADLVFDVRFLPNPYYLPELRNQTGVDEPVYDYVMNHPESEDFYQHLLALIEPILPSYQKEGKSVLTIAMGCTGGQHRSVAFAKRLAQDLSKNWSVNEGHRDKDRRKETVNRS.

Residue 13–20 coordinates ATP; it reads GMSGAGKT. 63–66 serves as a coordination point for GTP; the sequence is DMRS.

The protein belongs to the RapZ-like family.

In terms of biological role, displays ATPase and GTPase activities. The sequence is that of Nucleotide-binding protein SPT_1506 from Streptococcus pneumoniae (strain Taiwan19F-14).